The primary structure comprises 390 residues: 3-ketoacyl-CoA thiolase (390 aa).

Cysteine 95 serves as the catalytic Acyl-thioester intermediate. Active-site proton acceptor residues include histidine 346 and cysteine 376.

Belongs to the thiolase-like superfamily. Thiolase family. Heterotetramer of two alpha chains (FadB) and two beta chains (FadA).

Its subcellular location is the cytoplasm. The catalysed reaction is an acyl-CoA + acetyl-CoA = a 3-oxoacyl-CoA + CoA. It functions in the pathway lipid metabolism; fatty acid beta-oxidation. Catalyzes the final step of fatty acid oxidation in which acetyl-CoA is released and the CoA ester of a fatty acid two carbons shorter is formed. In Psychrobacter arcticus (strain DSM 17307 / VKM B-2377 / 273-4), this protein is 3-ketoacyl-CoA thiolase.